Here is a 134-residue protein sequence, read N- to C-terminus: Transcription antitermination protein NusB (134 aa).

The protein belongs to the NusB family.

Involved in transcription antitermination. Required for transcription of ribosomal RNA (rRNA) genes. Binds specifically to the boxA antiterminator sequence of the ribosomal RNA (rrn) operons. This is Transcription antitermination protein NusB from Shewanella sp. (strain MR-4).